We begin with the raw amino-acid sequence, 147 residues long: Spermidine export protein MdtJ (147 aa).

Helical transmembrane passes span 1–21, 31–51, 54–74, and 81–101; these read MIYWIFLGLAIIAEIIGTLSM, TGHIVMYFMITGSYVMLSLAV, VALGVAYALWEGIGILIITIF, and ETLSPLKIAGLVTLIGGILLV. The tract at residues 105–147 is disordered; it reads TRKPKQPNCHRGNRPPSVQELKTQTTGHHKGVAVESGEHHAAA.

The protein belongs to the drug/metabolite transporter (DMT) superfamily. Small multidrug resistance (SMR) (TC 2.A.7.1) family. MdtJ subfamily. As to quaternary structure, forms a complex with MdtI.

It localises to the cell inner membrane. In terms of biological role, catalyzes the excretion of spermidine. The polypeptide is Spermidine export protein MdtJ (Yersinia pestis bv. Antiqua (strain Antiqua)).